The chain runs to 504 residues: MINHEVRTHRSAEEFPYEEHLAHKIARVAADPVEVAADTQEMIINRIIDNASVQAASVLRRPVSSARAMAQVRPVTDGRGASVFGLPGRYAAEWAALANGTAVRELDFHDTFLAAEYSHPGDNIPPILAAAQQAGKGGKDLIRGIATGYEIQVNLVRGMCLHEHKIDHVAHLGPSAAAGIGTLLDLDVDTIYQAIGQALHTTTATRQSRKGAISSWKAFAPAFAGKMSIEAVDRAMRGEGAPSPIWEGEDGVIAWLLSGLDHIYTIPLPAEGEAKRAILDTYTKEHSAEYQSQAPIDLARSMGEKLAAQGLDLRDVDSIVLHTSHHTHYVIGTGSNDPQKFDPDASRETLDHSIMYIFAVALEDRAWHHERSYAPERAHRRETIELWNKISTVEDPEWTRRYHSVDPAEKAFGARAVITFKDGTVVEDELAVADAHPLGARPFAREQYIQKFRTLAEGVVSEKEQDRFLDAAQRTHELEDLSELNIELDADILAKAPVIPEGLF.

Belongs to the PrpD family. In terms of assembly, monomer.

It catalyses the reaction (2S,3S)-2-methylcitrate = 2-methyl-cis-aconitate + H2O. The catalysed reaction is citrate = D-threo-isocitrate. It functions in the pathway organic acid metabolism; propanoate degradation. Its pathway is carbohydrate metabolism; tricarboxylic acid cycle; isocitrate from oxaloacetate: step 1/2. Involved in the catabolism of short chain fatty acids (SCFA) via the 2-methylcitrate cycle I (propionate degradation route). Catalyzes the dehydration of 2-methylcitrate (2-MC) to yield the cis isomer 2-methyl-aconitate. Could also catalyze the dehydration of citrate and the hydration of cis-aconitate. The protein is 2-methylcitrate dehydratase 2 (prpD2) of Corynebacterium glutamicum (strain ATCC 13032 / DSM 20300 / JCM 1318 / BCRC 11384 / CCUG 27702 / LMG 3730 / NBRC 12168 / NCIMB 10025 / NRRL B-2784 / 534).